A 396-amino-acid chain; its full sequence is Elongation factor Tu (396 aa).

One can recognise a tr-type G domain in the interval 10–207; it reads KPHCNIGTIG…VDAYIPQPPR (198 aa). Residues 19 to 26 form a G1 region; the sequence is GHVDHGKT. 19–26 serves as a coordination point for GTP; that stretch reads GHVDHGKT. Thr-26 serves as a coordination point for Mg(2+). A G2 region spans residues 60 to 64; the sequence is GITIS. Residues 81-84 form a G3 region; the sequence is DCPG. Residues 81 to 85 and 136 to 139 each bind GTP; these read DCPGH and NKVD. Residues 136-139 form a G4 region; the sequence is NKVD. The tract at residues 174-176 is G5; the sequence is SAL.

This sequence belongs to the TRAFAC class translation factor GTPase superfamily. Classic translation factor GTPase family. EF-Tu/EF-1A subfamily. Monomer.

The protein localises to the cytoplasm. The enzyme catalyses GTP + H2O = GDP + phosphate + H(+). GTP hydrolase that promotes the GTP-dependent binding of aminoacyl-tRNA to the A-site of ribosomes during protein biosynthesis. In Novosphingobium aromaticivorans (strain ATCC 700278 / DSM 12444 / CCUG 56034 / CIP 105152 / NBRC 16084 / F199), this protein is Elongation factor Tu.